A 441-amino-acid polypeptide reads, in one-letter code: Probable D-serine dehydratase (441 aa).

Lys101 carries the N6-(pyridoxal phosphate)lysine modification.

It belongs to the serine/threonine dehydratase family. DsdA subfamily. Pyridoxal 5'-phosphate is required as a cofactor.

It carries out the reaction D-serine = pyruvate + NH4(+). This is Probable D-serine dehydratase from Geobacillus kaustophilus (strain HTA426).